The chain runs to 714 residues: Protein spire homolog 2 (714 aa).

Residues 22 to 203 (LSLEEVLKAY…RALFVETLEL (182 aa)) form the KIND domain. Positions 136-162 (DSEDSGCGAADEGYGGPEEEEEAEGVP) are disordered. WH2 domains are found at residues 248 to 262 (QLMR…LKKV), 278 to 296 (PFEM…LRKV), and 342 to 359 (LHEK…LRPV). Phosphoserine is present on residues serine 371, serine 440, serine 442, and serine 476. Residues 453-516 (VASGLQSATH…SSGDRPEASM (64 aa)) form a disordered region. The segment covering 486 to 496 (DQGTCPASVSD) has biased composition (polar residues). A spir-box region spans residues 534–554 (LALTVEEVMDVRRVLVKAEME).

This sequence belongs to the spire family.

The protein localises to the cytoplasm. Its subcellular location is the cytoskeleton. It is found in the cytosol. The protein resides in the cell membrane. It localises to the cytoplasmic vesicle membrane. Functionally, acts as an actin nucleation factor, remains associated with the slow-growing pointed end of the new filament. Involved in intracellular vesicle transport along actin fibers, providing a novel link between actin cytoskeleton dynamics and intracellular transport. Required for asymmetric spindle positioning and asymmetric cell division during meiosis. Required for normal formation of the cleavage furrow and for polar body extrusion during female germ cell meiosis. Also acts in the nucleus: together with SPIRE1 and SPIRE2, promotes assembly of nuclear actin filaments in response to DNA damage in order to facilitate movement of chromatin and repair factors after DNA damage. The polypeptide is Protein spire homolog 2 (SPIRE2) (Homo sapiens (Human)).